The sequence spans 275 residues: MTLNKCNPTTPSRRHTVKVVNNKLYKGKSFFKLTKSLNKSGGRNNQGRITTRHIGGRHKRKYRLIDFKRNKDDILAKVKRLEYDPNRSSNIALISYEDGEMRYILEAKGLKIGDKVQSGINAPIKIGNALPIKMFPFGSILHNIEIKPGKGGQIARSAGSYAQVVTHEKNYVIVKLRSGEIRKIFSECKATFGEVGNSEYMLKSLGKAGANRWRGIRPTVRGTAMNPIDHPHGGGEGKNFGKHPVSPWGVQSKGKKTRKNKRTEKYILYNRKYKK.

The interval arginine 221–lysine 275 is disordered. Residues lysine 253–arginine 262 show a composition bias toward basic residues.

It belongs to the universal ribosomal protein uL2 family. Part of the 50S ribosomal subunit. Forms a bridge to the 30S subunit in the 70S ribosome.

Its function is as follows. One of the primary rRNA binding proteins. Required for association of the 30S and 50S subunits to form the 70S ribosome, for tRNA binding and peptide bond formation. It has been suggested to have peptidyltransferase activity; this is somewhat controversial. Makes several contacts with the 16S rRNA in the 70S ribosome. This Wigglesworthia glossinidia brevipalpis protein is Large ribosomal subunit protein uL2.